The chain runs to 329 residues: 4-hydroxythreonine-4-phosphate dehydrogenase (329 aa).

Residues H136 and T137 each coordinate substrate. A divalent metal cation contacts are provided by H166, H211, and H266. Substrate contacts are provided by K274, N283, and R292.

It belongs to the PdxA family. Homodimer. Zn(2+) serves as cofactor. The cofactor is Mg(2+). Co(2+) is required as a cofactor.

The protein localises to the cytoplasm. The enzyme catalyses 4-(phosphooxy)-L-threonine + NAD(+) = 3-amino-2-oxopropyl phosphate + CO2 + NADH. Its pathway is cofactor biosynthesis; pyridoxine 5'-phosphate biosynthesis; pyridoxine 5'-phosphate from D-erythrose 4-phosphate: step 4/5. Catalyzes the NAD(P)-dependent oxidation of 4-(phosphooxy)-L-threonine (HTP) into 2-amino-3-oxo-4-(phosphooxy)butyric acid which spontaneously decarboxylates to form 3-amino-2-oxopropyl phosphate (AHAP). This chain is 4-hydroxythreonine-4-phosphate dehydrogenase, found in Shigella boydii serotype 4 (strain Sb227).